The primary structure comprises 155 residues: Deoxyuridine 5'-triphosphate nucleotidohydrolase (155 aa).

Substrate contacts are provided by residues 74 to 76 (RSG), asparagine 87, and 91 to 93 (TID).

It belongs to the dUTPase family. The cofactor is Mg(2+).

The catalysed reaction is dUTP + H2O = dUMP + diphosphate + H(+). Its pathway is pyrimidine metabolism; dUMP biosynthesis; dUMP from dCTP (dUTP route): step 2/2. Its function is as follows. This enzyme is involved in nucleotide metabolism: it produces dUMP, the immediate precursor of thymidine nucleotides and it decreases the intracellular concentration of dUTP so that uracil cannot be incorporated into DNA. This Cereibacter sphaeroides (strain ATCC 17023 / DSM 158 / JCM 6121 / CCUG 31486 / LMG 2827 / NBRC 12203 / NCIMB 8253 / ATH 2.4.1.) (Rhodobacter sphaeroides) protein is Deoxyuridine 5'-triphosphate nucleotidohydrolase.